The primary structure comprises 524 residues: Peptide chain release factor 3 (524 aa).

Residues alanine 11–glycine 278 form the tr-type G domain. GTP contacts are provided by residues serine 20–threonine 27, aspartate 88–histidine 92, and asparagine 142–aspartate 145.

Belongs to the TRAFAC class translation factor GTPase superfamily. Classic translation factor GTPase family. PrfC subfamily.

It is found in the cytoplasm. Increases the formation of ribosomal termination complexes and stimulates activities of RF-1 and RF-2. It binds guanine nucleotides and has strong preference for UGA stop codons. It may interact directly with the ribosome. The stimulation of RF-1 and RF-2 is significantly reduced by GTP and GDP, but not by GMP. The protein is Peptide chain release factor 3 of Lacticaseibacillus casei (strain BL23) (Lactobacillus casei).